The primary structure comprises 124 residues: Membrane magnesium transporter 2 (124 aa).

Position 1 (Met1) is a topological domain, cytoplasmic. A helical membrane pass occupies residues 2–22; that stretch reads VAWLWKVLVGVGLSALAHAAF. At 23-44 the chain is on the lumenal side; that stretch reads SAAQHRSHTRLAEMKYEPLPTD. Residues 45-65 form a helical membrane-spanning segment; that stretch reads IVLQTLLAFALTCYGVVHTAG. Over 66 to 124 the chain is Cytoplasmic; the sequence is DFRDRDATSELKNVTFDTLRNRPSFYVFQHSGSSLLQPSDTTRSSNLNVPSSDDIRLKF.

It belongs to the membrane magnesium transporter (TC 1.A.67) family.

The protein localises to the golgi apparatus membrane. Its subcellular location is the early endosome membrane. Its function is as follows. Mediates Mg(2+) transport. The sequence is that of Membrane magnesium transporter 2 from Rattus norvegicus (Rat).